The sequence spans 599 residues: Group II intron-encoded protein LtrA (599 aa).

A Reverse transcriptase domain is found at 70–361; sequence IIQSLKDGTY…QPARFLGYDI (292 aa). Positions 381-549 are intron maturase type-2; that stretch reads NGSVELLIPL…AKCCELCGTS (169 aa).

The protein in the N-terminal section; belongs to the bacterial reverse transcriptase family. Homodimer. It depends on Mg(2+) as a cofactor.

It carries out the reaction DNA(n) + a 2'-deoxyribonucleoside 5'-triphosphate = DNA(n+1) + diphosphate. In terms of biological role, multifunctional protein that promotes group II intron splicing and mobility by acting both on RNA and DNA. It has three activities: reverse transcriptase (RT) for intron duplication, maturase to promote splicing, and DNA endonuclease for site-specific cleavage of recipient alleles. The intron-encoded protein promotes splicing by facilitating the formation of the catalytically active structure of the intron RNA. After splicing, the protein remains bound to the excised intron lariat RNA, forming ribonucleoprotein particles, and cleaving the antisense strand of the recipient DNA in the 3' exon. After DNA cleavage, retrohoming occurs by a target DNA-primed reverse transcription of the intron RNA that had reverse spliced into the sense strand of the recipient DNA. It also contributes to the recognition of the DNA target site and acts as a repressor of its own translation. This is Group II intron-encoded protein LtrA (ltrA) from Lactococcus lactis subsp. cremoris (Streptococcus cremoris).